A 228-amino-acid polypeptide reads, in one-letter code: uncharacterized protein (228 aa).

Its subcellular location is the mitochondrion. This is an uncharacterized protein from Emericella nidulans (Aspergillus nidulans).